The following is a 226-amino-acid chain: Phosphoenolpyruvate guanylyltransferase (226 aa).

3 residues coordinate phosphoenolpyruvate: threonine 145, glycine 161, and serine 164.

It belongs to the CofC family.

It carries out the reaction phosphoenolpyruvate + GTP + H(+) = enolpyruvoyl-2-diphospho-5'-guanosine + diphosphate. Its pathway is cofactor biosynthesis; coenzyme F420 biosynthesis. In terms of biological role, guanylyltransferase that catalyzes the activation of phosphoenolpyruvate (PEP) as enolpyruvoyl-2-diphospho-5'-guanosine, via the condensation of PEP with GTP. It is involved in the biosynthesis of coenzyme F420, a hydride carrier cofactor. This is Phosphoenolpyruvate guanylyltransferase from Nocardia farcinica (strain IFM 10152).